A 157-amino-acid polypeptide reads, in one-letter code: Nicotinate dehydrogenase subunit A (157 aa).

The 2Fe-2S ferredoxin-type domain maps to threonine 3–leucine 79. [2Fe-2S] cluster contacts are provided by cysteine 41, cysteine 46, cysteine 49, and cysteine 61.

It depends on [2Fe-2S] cluster as a cofactor.

It catalyses the reaction 2 Fe(III)-[cytochrome] + nicotinate + H2O = 2 Fe(II)-[cytochrome] + 6-hydroxynicotinate + 2 H(+). It participates in cofactor degradation; nicotinate degradation. Subunit of the two-component enzyme NicAB that mediates nicotinate hydroxylation, the first step in the aerobic nicotinate degradation pathway. Mediates conversion of nicotinate into 6-hydroxynicotinate (6HNA). The protein is Nicotinate dehydrogenase subunit A (nicA) of Pseudomonas putida (strain ATCC 47054 / DSM 6125 / CFBP 8728 / NCIMB 11950 / KT2440).